The chain runs to 336 residues: Probable allantoicase 2 (336 aa).

It belongs to the allantoicase family.

The enzyme catalyses allantoate + H2O = (S)-ureidoglycolate + urea. The protein operates within nitrogen metabolism; (S)-allantoin degradation; (S)-ureidoglycolate from allantoate (aminidohydrolase route): step 1/1. The protein is Probable allantoicase 2 of Burkholderia mallei (strain ATCC 23344).